The chain runs to 155 residues: Isotocin-neurophysin IT 1 (155 aa).

A signal peptide spans 1 to 19 (MTGTAISVCLLFLLSVCSA). A disulfide bridge links Cys-20 with Cys-25. At Gly-28 the chain carries Glycine amide. 7 disulfides stabilise this stretch: Cys-41–Cys-85, Cys-44–Cys-58, Cys-52–Cys-75, Cys-59–Cys-65, Cys-92–Cys-105, Cys-99–Cys-117, and Cys-106–Cys-111.

This sequence belongs to the vasopressin/oxytocin family. In terms of processing, seven disulfide bonds are present in neurophysin.

In terms of biological role, isotocin causes contraction of smooth muscles. The polypeptide is Isotocin-neurophysin IT 1 (Takifugu rubripes (Japanese pufferfish)).